The following is a 438-amino-acid chain: 26S proteasome regulatory subunit 7 homolog (438 aa).

Residues 1 to 15 show a composition bias toward basic and acidic residues; sequence MPPKEDWEKYQKPVD. The interval 1-31 is disordered; the sequence is MPPKEDWEKYQKPVDTEEENDKNPPPLDEGD. Residue Ser90 is modified to Phosphoserine. 220–227 serves as a coordination point for ATP; that stretch reads GPPGTGKT.

The protein belongs to the AAA ATPase family.

The protein resides in the cytoplasm. It localises to the nucleus. Functionally, the 26S proteasome is involved in the ATP-dependent degradation of ubiquitinated proteins. The regulatory (or ATPase) complex confers ATP dependency and substrate specificity to the 26S complex. The sequence is that of 26S proteasome regulatory subunit 7 homolog (rpt1) from Schizosaccharomyces pombe (strain 972 / ATCC 24843) (Fission yeast).